Reading from the N-terminus, the 1632-residue chain is Guanine exchange factor for Rac 30 (1632 aa).

Positions 16–122 constitute a Calponin-homology (CH) domain; sequence NIQIDSFTSW…VIFLLIQKIK (107 aa). Disordered regions lie at residues 134 to 155 and 171 to 285; these read QGET…TPTK and FSHI…PTTG. 2 stretches are compositionally biased toward low complexity: residues 137-154 and 180-284; these read TTGT…TTPT and QSSS…SPTT. IQ domains lie at 388-417 and 432-461; these read DLKK…KYKQ and AYRG…LYRR. The region spanning 460 to 638 is the DH domain; that stretch reads RRNEIVKEIL…KDVAEYVNEK (179 aa). Residues 775-795 show a composition bias toward low complexity; that stretch reads QINNQNNNQNNNQNNNLNNNN. Residues 775–798 form a disordered region; it reads QINNQNNNQNNNQNNNLNNNNDDS. Residues 940-1038 enclose the PH 1 domain; sequence DSEFSNVLEK…WISLIRLSIK (99 aa). The segment covering 1138–1156 has biased composition (low complexity); it reads STSASQSQSQSPSPSPSHS. Residues 1138-1161 form a disordered region; sequence STSASQSQSQSPSPSPSHSINQKQ. The Arf-GAP domain maps to 1271–1389; sequence NSCGDNINND…NNNNNNSQNG (119 aa). The segment at 1286 to 1309 adopts a C4-type zinc-finger fold; that stretch reads CAECGASDPSWVSINYGVVVCLDC. Composition is skewed to low complexity over residues 1380–1402, 1409–1431, and 1441–1481; these read NNNN…TSTT, STPT…TTQT, and SSPT…TTPT. A disordered region spans residues 1380–1521; sequence NNNNNNSQNG…SSHAITERKT (142 aa). The segment covering 1500–1515 has biased composition (polar residues); it reads DTSNGKGTWSRGSSHA. Residues 1532 to 1631 form the PH 2 domain; sequence KKEHQGYLFK…WLDVLSSHTT (100 aa).

It localises to the membrane. Its subcellular location is the cytoplasmic vesicle. It is found in the phagosome membrane. In terms of biological role, GTPase-activating protein for Rac involved in streaming and development. The chain is Guanine exchange factor for Rac 30 (gxcDD) from Dictyostelium discoideum (Social amoeba).